The primary structure comprises 344 residues: GTP 3',8-cyclase (344 aa).

The Radical SAM core domain occupies 19–245 (PFGRAVTYLR…DIPYRTGGPA (227 aa)). Arg-28 is a binding site for GTP. Residues Cys-35 and Cys-39 each coordinate [4Fe-4S] cluster. Tyr-41 serves as a coordination point for S-adenosyl-L-methionine. Cys-42 contributes to the [4Fe-4S] cluster binding site. Arg-77 provides a ligand contact to GTP. Gly-81 is a binding site for S-adenosyl-L-methionine. Thr-111 provides a ligand contact to GTP. Ser-135 serves as a coordination point for S-adenosyl-L-methionine. Lys-171 contributes to the GTP binding site. Met-205 is a binding site for S-adenosyl-L-methionine. The [4Fe-4S] cluster site is built by Cys-268 and Cys-271. 273-275 (RVR) is a GTP binding site. Cys-285 lines the [4Fe-4S] cluster pocket.

It belongs to the radical SAM superfamily. MoaA family. Monomer and homodimer. It depends on [4Fe-4S] cluster as a cofactor.

It catalyses the reaction GTP + AH2 + S-adenosyl-L-methionine = (8S)-3',8-cyclo-7,8-dihydroguanosine 5'-triphosphate + 5'-deoxyadenosine + L-methionine + A + H(+). It participates in cofactor biosynthesis; molybdopterin biosynthesis. Functionally, catalyzes the cyclization of GTP to (8S)-3',8-cyclo-7,8-dihydroguanosine 5'-triphosphate. This chain is GTP 3',8-cyclase, found in Brucella melitensis biotype 2 (strain ATCC 23457).